Here is a 580-residue protein sequence, read N- to C-terminus: Putative monoterpene synthase 8 (580 aa).

A chloroplast-targeting transit peptide spans 1–44; sequence MACTSNLSSLSKSWAVLDVPRGAPKATGLWLKRQFIFKTSRICM. The Mg(2+) site is built by D333, D337, D478, T482, and E486. The DDXXD motif signature appears at 333-337; the sequence is DDIFD.

It belongs to the terpene synthase family. Tpsg subfamily. As to quaternary structure, monomer. It depends on Mg(2+) as a cofactor. The cofactor is Mn(2+). Confined to flowers.

It localises to the plastid. Its subcellular location is the chloroplast. It functions in the pathway secondary metabolite biosynthesis; terpenoid biosynthesis. In terms of biological role, monoterpene synthase (mono-TPS) involved in the biosynthesis of monoterpenes natural products, constituent of coffee beverage aroma. The sequence is that of Putative monoterpene synthase 8 from Coffea arabica (Arabian coffee).